The sequence spans 183 residues: Phospholipase A2 inhibitor gamma subunit A1 (183 aa).

8 disulfides stabilise this stretch: C3-C28, C6-C13, C21-C49, C55-C76, C77-C82, C100-C125, C118-C147, and C151-C173. An N-linked (GlcNAc...) asparagine glycan is attached at N158.

This sequence belongs to the CNF-like-inhibitor family. In terms of assembly, heterodimer of subunit A and subunit B. In terms of tissue distribution, expressed by the liver.

The protein resides in the secreted. In terms of biological role, phospholipase A2 (PA2) inhibitor. Inhibits the enzymatic activity of PA2 of Deinagkistrodon acutus. Also shows a wide anti-hemorrhage activities to D.acutus, Naja atra and Agkistrodon halys venom. The native protein is more potent than the recombinant one. The protein is Phospholipase A2 inhibitor gamma subunit A1 of Trimerodytes annularis (Red-bellied annulate keelback).